The sequence spans 246 residues: Ribonuclease 3 (246 aa).

The RNase III domain maps to 30 to 152 (ISWIEKNLGH…MIGAIFLESG (123 aa)). Glu-65 serves as a coordination point for Mg(2+). Asp-69 is a catalytic residue. Positions 138 and 141 each coordinate Mg(2+). The active site involves Glu-141. A DRBM domain is found at 177 to 246 (HPKSALQEWA…AQALLDILAQ (70 aa)).

It belongs to the ribonuclease III family. In terms of assembly, homodimer. Requires Mg(2+) as cofactor.

The protein localises to the cytoplasm. It catalyses the reaction Endonucleolytic cleavage to 5'-phosphomonoester.. Its function is as follows. Digests double-stranded RNA. Involved in the processing of primary rRNA transcript to yield the immediate precursors to the large and small rRNAs (23S and 16S). Processes some mRNAs, and tRNAs when they are encoded in the rRNA operon. Processes pre-crRNA and tracrRNA of type II CRISPR loci if present in the organism. The protein is Ribonuclease 3 of Zymomonas mobilis subsp. mobilis (strain ATCC 31821 / ZM4 / CP4).